The following is a 553-amino-acid chain: Cytokine-like nuclear factor N-PAC (553 aa).

A PWWP domain is found at 8-66; sequence LGDLVWGKLGRYPPWPGKIVNPPKDLKKPRGKKCFFVKFFGTEDHAWIKVEQLKPYHLH. 2 stretches are compositionally biased toward basic and acidic residues: residues 92–145 and 162–182; these read KTKG…EGKK and RAQD…KDLT. The tract at residues 92–188 is disordered; that stretch reads KTKGKDQASS…KDLTIPESST (97 aa). A DNA-binding region (a.T hook) is located at residues 168 to 180; it reads PRKRGRPPKDEKD. The segment at 214–217 is interaction with histone H3; the sequence is DPHF. Residues 261 to 553 form a dehydrogenase domain region; it reads GSITPTDKKI…MSAVYRAYIH (293 aa). NAD(+) contacts are provided by residues 271–285, threonine 362, and lysine 505; that span reads GFLG…IVSN.

The protein belongs to the HIBADH-related family. NP60 subfamily. In terms of assembly, homotetramere. Binds to mononucleosomes.

The protein localises to the nucleus. The protein resides in the chromosome. In terms of biological role, cytokine-like nuclear factor with chromatin gene reader activity involved in chromatin modification and regulation of gene expression. Acts as a nucleosome-destabilizing factor that is recruited to genes during transcriptional activation. Recognizes and binds histone H3 without a preference for specific epigenetic markers and also binds DNA. Interacts with KDM1B and promotes its histone demethylase activity by facilitating the capture of H3 tails, they form a multifunctional enzyme complex that modifies transcribed chromatin and facilitates Pol II transcription through nucleosomes. The polypeptide is Cytokine-like nuclear factor N-PAC (GLYR1) (Gallus gallus (Chicken)).